Here is a 649-residue protein sequence, read N- to C-terminus: Echinoderm microtubule-associated protein-like 2 (649 aa).

The interval 10–649 (KEVIFSVEDG…DTSVLQWRVV (640 aa)) is tandem atypical propeller in EMLs. Coiled-coil stretches lie at residues 13–58 (IFSV…LKLE) and 73–114 (YLLP…LAIH). WD repeat units lie at residues 56–93 (KLEW…LYSV), 97–144 (RQRH…IWDS), 151–192 (HVLG…VWDW), 195–234 (ETKV…FWTL), 241–280 (KRQG…VWGK), 285–323 (ITQA…LWGS), 369–406 (FSLL…LWSS), 410–447 (QPLW…LLDT), 452–489 (LVAI…VYTV), 495–535 (KVSR…YWDP), 564–602 (FGIW…LFSY), and 609–648 (ALSH…QWRV).

Belongs to the WD repeat EMAP family. As to quaternary structure, homotrimer; self-association is mediated by the N-terminal coiled coil. In terms of assembly, interacts with GRID2 and may also interact with GRID1. Interacts with EML3. Binds unpolymerized tubulins via its WD repeat region. In terms of tissue distribution, ubiquitous.

It is found in the cytoplasm. The protein localises to the cytoskeleton. The protein resides in the spindle. Its function is as follows. Tubulin binding protein that inhibits microtubule nucleation and growth, resulting in shorter microtubules. This chain is Echinoderm microtubule-associated protein-like 2 (EML2), found in Homo sapiens (Human).